Reading from the N-terminus, the 74-residue chain is ATP synthase subunit c (74 aa).

A run of 2 helical transmembrane segments spans residues 8–28 and 52–72; these read FIGI…VSNI and IGAG…MLLI.

It belongs to the ATPase C chain family. F-type ATPases have 2 components, F(1) - the catalytic core - and F(0) - the membrane proton channel. F(1) has five subunits: alpha(3), beta(3), gamma(1), delta(1), epsilon(1). F(0) has three main subunits: a(1), b(2) and c(10-14). The alpha and beta chains form an alternating ring which encloses part of the gamma chain. F(1) is attached to F(0) by a central stalk formed by the gamma and epsilon chains, while a peripheral stalk is formed by the delta and b chains.

Its subcellular location is the cell inner membrane. In terms of biological role, f(1)F(0) ATP synthase produces ATP from ADP in the presence of a proton or sodium gradient. F-type ATPases consist of two structural domains, F(1) containing the extramembraneous catalytic core and F(0) containing the membrane proton channel, linked together by a central stalk and a peripheral stalk. During catalysis, ATP synthesis in the catalytic domain of F(1) is coupled via a rotary mechanism of the central stalk subunits to proton translocation. Functionally, key component of the F(0) channel; it plays a direct role in translocation across the membrane. A homomeric c-ring of between 10-14 subunits forms the central stalk rotor element with the F(1) delta and epsilon subunits. This is ATP synthase subunit c from Rickettsia felis (strain ATCC VR-1525 / URRWXCal2) (Rickettsia azadi).